Consider the following 310-residue polypeptide: Methionyl-tRNA formyltransferase (310 aa).

(6S)-5,6,7,8-tetrahydrofolate is bound at residue 112–115 (SLLP).

It belongs to the Fmt family.

It carries out the reaction L-methionyl-tRNA(fMet) + (6R)-10-formyltetrahydrofolate = N-formyl-L-methionyl-tRNA(fMet) + (6S)-5,6,7,8-tetrahydrofolate + H(+). Functionally, attaches a formyl group to the free amino group of methionyl-tRNA(fMet). The formyl group appears to play a dual role in the initiator identity of N-formylmethionyl-tRNA by promoting its recognition by IF2 and preventing the misappropriation of this tRNA by the elongation apparatus. This is Methionyl-tRNA formyltransferase from Pelagibacter ubique (strain HTCC1062).